The primary structure comprises 100 residues: NADH-quinone oxidoreductase subunit K (100 aa).

3 helical membrane-spanning segments follow: residues 4 to 24 (MQHG…GLLI), 28 to 48 (LIFM…AWVV), and 60 to 80 (IFYL…LALL).

The protein belongs to the complex I subunit 4L family. In terms of assembly, NDH-1 is composed of 13 different subunits. Subunits NuoA, H, J, K, L, M, N constitute the membrane sector of the complex.

The protein localises to the cell membrane. The catalysed reaction is a quinone + NADH + 5 H(+)(in) = a quinol + NAD(+) + 4 H(+)(out). Its function is as follows. NDH-1 shuttles electrons from NADH, via FMN and iron-sulfur (Fe-S) centers, to quinones in the respiratory chain. The immediate electron acceptor for the enzyme in this species is believed to be ubiquinone. Couples the redox reaction to proton translocation (for every two electrons transferred, four hydrogen ions are translocated across the cytoplasmic membrane), and thus conserves the redox energy in a proton gradient. This is NADH-quinone oxidoreductase subunit K from Hamiltonella defensa subsp. Acyrthosiphon pisum (strain 5AT).